A 292-amino-acid polypeptide reads, in one-letter code: 33 kDa chaperonin (292 aa).

2 disulfides stabilise this stretch: C230–C232 and C263–C266.

Belongs to the HSP33 family. Under oxidizing conditions two disulfide bonds are formed involving the reactive cysteines. Under reducing conditions zinc is bound to the reactive cysteines and the protein is inactive.

It is found in the cytoplasm. Its function is as follows. Redox regulated molecular chaperone. Protects both thermally unfolding and oxidatively damaged proteins from irreversible aggregation. Plays an important role in the bacterial defense system toward oxidative stress. In Shigella boydii serotype 4 (strain Sb227), this protein is 33 kDa chaperonin.